Reading from the N-terminus, the 310-residue chain is Olfactory receptor 5AR1 (310 aa).

At Met-1–Phe-28 the chain is on the extracellular side. Asn-5 carries N-linked (GlcNAc...) asparagine glycosylation. A helical transmembrane segment spans residues Val-29–Ile-49. Residues Thr-50–Pro-58 are Cytoplasmic-facing. The helical transmembrane segment at Met-59–Pro-79 threads the bilayer. Topologically, residues Arg-80 to Gln-100 are extracellular. Cys-97 and Cys-189 are disulfide-bonded. The chain crosses the membrane as a helical span at residues Phe-101 to Tyr-120. Residues Gly-121–Gln-139 are Cytoplasmic-facing. The chain crosses the membrane as a helical span at residues Val-140–Thr-160. Over Thr-161–Phe-205 the chain is Extracellular. A helical membrane pass occupies residues Ile-206–Ile-226. Residues Arg-227–Ser-239 are Cytoplasmic-facing. A helical transmembrane segment spans residues Thr-240–Leu-260. Residues Arg-261–Asp-271 lie on the Extracellular side of the membrane. Residues Lys-272 to Leu-292 form a helical membrane-spanning segment. The Cytoplasmic segment spans residues Arg-293–Gln-310.

Belongs to the G-protein coupled receptor 1 family.

The protein resides in the cell membrane. In terms of biological role, odorant receptor. The protein is Olfactory receptor 5AR1 of Homo sapiens (Human).